Reading from the N-terminus, the 257-residue chain is Imidazole glycerol phosphate synthase subunit HisF (257 aa).

Catalysis depends on residues Asp12 and Asp131.

It belongs to the HisA/HisF family. As to quaternary structure, heterodimer of HisH and HisF.

The protein resides in the cytoplasm. It carries out the reaction 5-[(5-phospho-1-deoxy-D-ribulos-1-ylimino)methylamino]-1-(5-phospho-beta-D-ribosyl)imidazole-4-carboxamide + L-glutamine = D-erythro-1-(imidazol-4-yl)glycerol 3-phosphate + 5-amino-1-(5-phospho-beta-D-ribosyl)imidazole-4-carboxamide + L-glutamate + H(+). The protein operates within amino-acid biosynthesis; L-histidine biosynthesis; L-histidine from 5-phospho-alpha-D-ribose 1-diphosphate: step 5/9. In terms of biological role, IGPS catalyzes the conversion of PRFAR and glutamine to IGP, AICAR and glutamate. The HisF subunit catalyzes the cyclization activity that produces IGP and AICAR from PRFAR using the ammonia provided by the HisH subunit. This is Imidazole glycerol phosphate synthase subunit HisF from Burkholderia ambifaria (strain MC40-6).